A 152-amino-acid polypeptide reads, in one-letter code: Nucleoside diphosphate kinase (152 aa).

ATP-binding residues include lysine 10, phenylalanine 58, arginine 86, threonine 92, arginine 103, and asparagine 113. The active-site Pros-phosphohistidine intermediate is the histidine 116.

It belongs to the NDK family. Mg(2+) is required as a cofactor.

The protein localises to the cytoplasm. It catalyses the reaction a 2'-deoxyribonucleoside 5'-diphosphate + ATP = a 2'-deoxyribonucleoside 5'-triphosphate + ADP. The enzyme catalyses a ribonucleoside 5'-diphosphate + ATP = a ribonucleoside 5'-triphosphate + ADP. Functionally, major role in the synthesis of nucleoside triphosphates other than ATP. The ATP gamma phosphate is transferred to the NDP beta phosphate via a ping-pong mechanism, using a phosphorylated active-site intermediate. This is Nucleoside diphosphate kinase from Methanosphaera stadtmanae (strain ATCC 43021 / DSM 3091 / JCM 11832 / MCB-3).